We begin with the raw amino-acid sequence, 405 residues long: PP2A regulatory subunit TAP46 (405 aa).

Disordered stretches follow at residues 159–189 and 352–405; these read ERRG…SEEE and ATTS…TPCG. The span at 165 to 174 shows a compositional bias: polar residues; the sequence is TKASALSTPV. 2 stretches are compositionally biased toward acidic residues: residues 176 to 189 and 367 to 377; these read SGED…SEEE and EDEEDDDEDEE. A compositionally biased stretch (basic and acidic residues) spans 378–393; that stretch reads AVMKARAFDDWKDDNP.

Belongs to the IGBP1/TAP42 family. Interacts with the 36 kDa catalytic subunit (subunit C) of PP2A. Interacts with PP2A1 and PP2A2. Interacts with PP2A3, PPX1 and FYPP1. Interacts with FYPP3 and ABI5. Interacts with ATPK1/S6K1 and ATPK2/S6K2. Interacts with TIP41L. In terms of processing, phosphorylated by TOR kinase in vitro. In terms of tissue distribution, ubiquitous. Highly expressed in seed, and particularly in the embryo.

Involved in the positive regulation of the TOR signaling pathway. Acts as a negative regulator of PP2A catalytic activity. Plays a positive role in the ABA-regulated inhibition of germination, probably throught its interaction with ABI5. This Arabidopsis thaliana (Mouse-ear cress) protein is PP2A regulatory subunit TAP46.